Here is a 226-residue protein sequence, read N- to C-terminus: ATP synthase F(0) complex subunit a (226 aa).

6 helical membrane passes run 12–32 (PTVL…LLVP), 68–88 (WSLM…LGLF), 97–117 (QLSM…AMGL), 138–158 (IPML…ALAV), 164–184 (ITAG…MLTI), and 189–209 (TLIT…VALI).

The protein belongs to the ATPase A chain family. In terms of assembly, component of the ATP synthase complex composed at least of ATP5F1A/subunit alpha, ATP5F1B/subunit beta, ATP5MC1/subunit c (homooctomer), MT-ATP6/subunit a, MT-ATP8/subunit 8, ATP5ME/subunit e, ATP5MF/subunit f, ATP5MG/subunit g, ATP5MK/subunit k, ATP5MJ/subunit j, ATP5F1C/subunit gamma, ATP5F1D/subunit delta, ATP5F1E/subunit epsilon, ATP5PF/subunit F6, ATP5PB/subunit b, ATP5PD/subunit d, ATP5PO/subunit OSCP. ATP synthase complex consists of a soluble F(1) head domain (subunits alpha(3) and beta(3)) - the catalytic core - and a membrane F(0) domain - the membrane proton channel (subunits c, a, 8, e, f, g, k and j). These two domains are linked by a central stalk (subunits gamma, delta, and epsilon) rotating inside the F1 region and a stationary peripheral stalk (subunits F6, b, d, and OSCP). Interacts with DNAJC30; interaction is direct.

Its subcellular location is the mitochondrion inner membrane. The catalysed reaction is H(+)(in) = H(+)(out). Its function is as follows. Subunit a, of the mitochondrial membrane ATP synthase complex (F(1)F(0) ATP synthase or Complex V) that produces ATP from ADP in the presence of a proton gradient across the membrane which is generated by electron transport complexes of the respiratory chain. ATP synthase complex consist of a soluble F(1) head domain - the catalytic core - and a membrane F(1) domain - the membrane proton channel. These two domains are linked by a central stalk rotating inside the F(1) region and a stationary peripheral stalk. During catalysis, ATP synthesis in the catalytic domain of F(1) is coupled via a rotary mechanism of the central stalk subunits to proton translocation. With the subunit c (ATP5MC1), forms the proton-conducting channel in the F(0) domain, that contains two crucial half-channels (inlet and outlet) that facilitate proton movement from the mitochondrial intermembrane space (IMS) into the matrix. Protons are taken up via the inlet half-channel and released through the outlet half-channel, following a Grotthuss mechanism. The chain is ATP synthase F(0) complex subunit a from Pongo pygmaeus (Bornean orangutan).